Reading from the N-terminus, the 327-residue chain is tRNA dimethylallyltransferase (327 aa).

Gly14–Thr21 contributes to the ATP binding site. Thr16–Thr21 lines the substrate pocket. Interaction with substrate tRNA stretches follow at residues Asp39–Leu42 and Gln163–Arg167.

It belongs to the IPP transferase family. In terms of assembly, monomer. It depends on Mg(2+) as a cofactor.

The enzyme catalyses adenosine(37) in tRNA + dimethylallyl diphosphate = N(6)-dimethylallyladenosine(37) in tRNA + diphosphate. Catalyzes the transfer of a dimethylallyl group onto the adenine at position 37 in tRNAs that read codons beginning with uridine, leading to the formation of N6-(dimethylallyl)adenosine (i(6)A). The sequence is that of tRNA dimethylallyltransferase from Xanthomonas oryzae pv. oryzae (strain MAFF 311018).